Here is a 454-residue protein sequence, read N- to C-terminus: F-box protein At1g67130 (454 aa).

Positions 4 to 53 (GETLDSIPTDLILDILSRLPTKSIARFHCVSKLWSSMLASQDFTRLFVNR) constitute an F-box domain.

The protein is F-box protein At1g67130 of Arabidopsis thaliana (Mouse-ear cress).